The chain runs to 136 residues: Small ribosomal subunit protein uS8c (136 aa).

The protein belongs to the universal ribosomal protein uS8 family. In terms of assembly, part of the 30S ribosomal subunit.

It localises to the plastid. The protein localises to the chloroplast. In terms of biological role, one of the primary rRNA binding proteins, it binds directly to 16S rRNA central domain where it helps coordinate assembly of the platform of the 30S subunit. This Hordeum vulgare (Barley) protein is Small ribosomal subunit protein uS8c (rps8).